We begin with the raw amino-acid sequence, 111 residues long: Large ribosomal subunit protein P2 (111 aa).

The span at 63–84 shows a compositional bias: low complexity; that stretch reads ASMPTGGAPAAAAGGAATAPAA. Residues 63 to 111 form a disordered region; sequence ASMPTGGAPAAAAGGAATAPAAEAKEAKKEEKKEESEEEDEDMGFGLFD. Positions 85–97 are enriched in basic and acidic residues; the sequence is EAKEAKKEEKKEE. Serine 98 is subject to Phosphoserine.

As to quaternary structure, part of the ribosomal stalk of the large ribosomal subunit; P1 and P2 exist as dimers which assemble on the P0 scaffold.

In terms of biological role, plays an important role in the elongation step of protein synthesis. In Artemia salina (Brine shrimp), this protein is Large ribosomal subunit protein P2.